Reading from the N-terminus, the 380-residue chain is MNTIVIAPDSFKESMTALQAARAIEKGFRRVIPNANYRLIPMADGGEGTVQSIVDALQGERKVVKVEGPLGDTVEAEYGLSGDRKIAVIEMAQASGLHLVPKEKRNPLWTSTYGTGQLLIDALDEGVEQIILGIGGSATNDGGAGMAQAVGVRLLKENGEPIGKGGGKLKELARIDMSKVDPRIQQVKLQVACDVDNPLVGEKGAAVVYGPQKGATRATIRELDEQLLHFANIIEEELGKEVASIPGAGAAGGLGAGLIAFLDAKLIPGVELVLQATNFHELVKDADFVITGEGRIDQQTVYGKTPIGVAKAAKQYGVPVIAIAGSLGQGYEAVFEHGIDAAFSLVPRIMSLDEAMQQGDSLLEQAARNIAVVSSWNKST.

The protein belongs to the glycerate kinase type-1 family.

It carries out the reaction (R)-glycerate + ATP = (2R)-3-phosphoglycerate + ADP + H(+). This chain is Glycerate kinase (glxK), found in Halalkalibacterium halodurans (strain ATCC BAA-125 / DSM 18197 / FERM 7344 / JCM 9153 / C-125) (Bacillus halodurans).